Consider the following 348-residue polypeptide: Beta-hexosaminidase (348 aa).

Substrate-binding positions include Asp-64, Arg-72, Arg-138, and 168-169; that span reads KH. Residue His-181 is the Proton donor/acceptor of the active site. Catalysis depends on Asp-252, which acts as the Nucleophile.

The protein belongs to the glycosyl hydrolase 3 family. NagZ subfamily.

The protein localises to the cytoplasm. It carries out the reaction Hydrolysis of terminal non-reducing N-acetyl-D-hexosamine residues in N-acetyl-beta-D-hexosaminides.. It participates in cell wall biogenesis; peptidoglycan recycling. Functionally, plays a role in peptidoglycan recycling by cleaving the terminal beta-1,4-linked N-acetylglucosamine (GlcNAc) from peptide-linked peptidoglycan fragments, giving rise to free GlcNAc, anhydro-N-acetylmuramic acid and anhydro-N-acetylmuramic acid-linked peptides. This chain is Beta-hexosaminidase, found in Alkalilimnicola ehrlichii (strain ATCC BAA-1101 / DSM 17681 / MLHE-1).